The following is a 376-amino-acid chain: N-acetyldiaminopimelate deacetylase (376 aa).

Residue aspartate 69 is part of the active site. Catalysis depends on glutamate 128, which acts as the Proton acceptor.

Belongs to the peptidase M20A family. N-acetyldiaminopimelate deacetylase subfamily.

It carries out the reaction N-acetyl-(2S,6S)-2,6-diaminopimelate + H2O = (2S,6S)-2,6-diaminopimelate + acetate. The protein operates within amino-acid biosynthesis; L-lysine biosynthesis via DAP pathway; LL-2,6-diaminopimelate from (S)-tetrahydrodipicolinate (acetylase route): step 3/3. Functionally, catalyzes the conversion of N-acetyl-diaminopimelate to diaminopimelate and acetate. This chain is N-acetyldiaminopimelate deacetylase, found in Bacillus cereus (strain AH820).